Here is a 252-residue protein sequence, read N- to C-terminus: tRNA (guanine-N(1)-)-methyltransferase (252 aa).

S-adenosyl-L-methionine-binding positions include G113 and 133 to 138 (VGDFVL).

It belongs to the RNA methyltransferase TrmD family. As to quaternary structure, homodimer.

The protein localises to the cytoplasm. The catalysed reaction is guanosine(37) in tRNA + S-adenosyl-L-methionine = N(1)-methylguanosine(37) in tRNA + S-adenosyl-L-homocysteine + H(+). In terms of biological role, specifically methylates guanosine-37 in various tRNAs. The protein is tRNA (guanine-N(1)-)-methyltransferase of Francisella tularensis subsp. holarctica (strain FTNF002-00 / FTA).